The chain runs to 542 residues: Chaperonin GroEL 1 (542 aa).

Residues 30 to 33, K51, 87 to 91, G415, 480 to 482, and D496 contribute to the ATP site; these read TLGP, DGTTT, and NAA.

Belongs to the chaperonin (HSP60) family. In terms of assembly, forms a cylinder of 14 subunits composed of two heptameric rings stacked back-to-back. Interacts with the co-chaperonin GroES.

Its subcellular location is the cytoplasm. It carries out the reaction ATP + H2O + a folded polypeptide = ADP + phosphate + an unfolded polypeptide.. Its function is as follows. Together with its co-chaperonin GroES, plays an essential role in assisting protein folding. The GroEL-GroES system forms a nano-cage that allows encapsulation of the non-native substrate proteins and provides a physical environment optimized to promote and accelerate protein folding. The protein is Chaperonin GroEL 1 of Nitrobacter winogradskyi (strain ATCC 25391 / DSM 10237 / CIP 104748 / NCIMB 11846 / Nb-255).